The sequence spans 97 residues: Signal recognition particle 19 kDa protein (97 aa).

The protein belongs to the SRP19 family. In terms of assembly, part of the signal recognition particle protein translocation system, which is composed of SRP and FtsY. Archaeal SRP consists of a 7S RNA molecule of 300 nucleotides and two protein subunits: SRP54 and SRP19.

The protein localises to the cytoplasm. In terms of biological role, involved in targeting and insertion of nascent membrane proteins into the cytoplasmic membrane. Binds directly to 7S RNA and mediates binding of the 54 kDa subunit of the SRP. The chain is Signal recognition particle 19 kDa protein from Pyrobaculum calidifontis (strain DSM 21063 / JCM 11548 / VA1).